A 582-amino-acid polypeptide reads, in one-letter code: Potassium-transporting ATPase potassium-binding subunit (582 aa).

The next 10 membrane-spanning stretches (helical) occupy residues 11–31, 81–101, 148–168, 195–215, 272–292, 298–318, 379–399, 401–421, 439–459, and 551–571; these read AVFF…LAWV, LKAV…VLMF, FGIG…MPAF, LLPI…VQTI, VLTL…GAWV, GVAI…VAVV, ALGA…NGVG, GLLN…LMIG, VFVV…AAVV, and GLLI…ALVF.

It belongs to the KdpA family. The system is composed of three essential subunits: KdpA, KdpB and KdpC.

The protein resides in the cell membrane. Its function is as follows. Part of the high-affinity ATP-driven potassium transport (or Kdp) system, which catalyzes the hydrolysis of ATP coupled with the electrogenic transport of potassium into the cytoplasm. This subunit binds the extracellular potassium ions and delivers the ions to the membrane domain of KdpB through an intramembrane tunnel. In Halobacterium salinarum (strain ATCC 700922 / JCM 11081 / NRC-1) (Halobacterium halobium), this protein is Potassium-transporting ATPase potassium-binding subunit.